Reading from the N-terminus, the 190-residue chain is Ribose 1,5-bisphosphate phosphokinase PhnN (190 aa).

11–18 (GPSGSGKD) serves as a coordination point for ATP.

The protein belongs to the ribose 1,5-bisphosphokinase family.

The catalysed reaction is alpha-D-ribose 1,5-bisphosphate + ATP = 5-phospho-alpha-D-ribose 1-diphosphate + ADP. It functions in the pathway metabolic intermediate biosynthesis; 5-phospho-alpha-D-ribose 1-diphosphate biosynthesis; 5-phospho-alpha-D-ribose 1-diphosphate from D-ribose 5-phosphate (route II): step 3/3. Its function is as follows. Catalyzes the phosphorylation of ribose 1,5-bisphosphate to 5-phospho-D-ribosyl alpha-1-diphosphate (PRPP). This chain is Ribose 1,5-bisphosphate phosphokinase PhnN, found in Thiobacillus denitrificans (strain ATCC 25259 / T1).